A 990-amino-acid chain; its full sequence is Protein argonaute 7 (990 aa).

A compositionally biased stretch (basic residues) spans 1–13 (MEEKTHHHHHSTN). Residues 1 to 25 (MEEKTHHHHHSTNKHIPSSKSRTPL) form a disordered region. The 106-residue stretch at 379–484 (EFLTDLPRNK…LPMELCMICE (106 aa)) folds into the PAZ domain. Positions 649 to 950 (LIICVMEKKH…AAYRGRLYIE (302 aa)) constitute a Piwi domain. The tract at residues 953–973 (SESNGGSMNPSSVSRVGPPKT) is disordered. The segment covering 954-966 (ESNGGSMNPSSVS) has biased composition (polar residues).

This sequence belongs to the argonaute family. Ago subfamily. As to expression, expressed in leaves and floral buds, and at low levels in roots.

Its function is as follows. Involved in RNA-mediated post-transcriptional gene silencing (PTGS). Main component of the RNA-induced silencing complex (RISC) that binds to a short guide RNA such as a microRNA (miRNA) or small interfering RNA (siRNA). RISC uses the mature miRNA or siRNA as a guide for slicer-directed cleavage of homologous mRNAs to repress gene expression. Required for the processing of 21 nucleotide trans-acting siRNAs (ta-siRNAs) derived from TAS3a transcripts. Associates preferentially with the microRNA (miRNA) miR390 which guides the cleavage of TAS3 precursor RNA. Seems to act as miR390 specific slicer. Associates mainly with small RNAs of 21 nucleotide in length and with a 5' terminal adenosine. Acts in the RDR6/SGS3/DCL4/AGO7 trans-acting siRNA pathway involved in leaf developmental timing. Does not seem to act on leaf polarity. Required for the production of the 30-40nt bacterial-induced long siRNAs (lsiRNA). Involved in antiviral RNA silencing by contributing to efficient viral RNAs clearance. Targets less structured viral RNAs than AGO1 which is capable of targeting RNAs with more compact structures. This chain is Protein argonaute 7 (AGO7), found in Arabidopsis thaliana (Mouse-ear cress).